Here is a 765-residue protein sequence, read N- to C-terminus: Protein transport protein Sec23A (765 aa).

Threonine 2 carries the N-acetylthreonine modification. Zn(2+) contacts are provided by cysteine 61, cysteine 66, cysteine 85, and cysteine 88. Threonine 308 carries the phosphothreonine modification. The stretch at 632-718 is one Gelsolin-like repeat; sequence PEPVLLDSSS…EHGGSQARFL (87 aa).

The protein belongs to the SEC23/SEC24 family. SEC23 subfamily. COPII is composed of at least five proteins: the Sec23/24 complex, the Sec13/31 complex and Sar1. Interacts with SEC23IP. Interacts with HTR4. Interacts with SEC16A. Interacts with SLC6A4. Interacts (as part of the Sec23/24 complex) with SEC22B; recruits SEC22B into COPII-coated vesicles and allows the transport of this cargo from the endoplasmic reticulum to the Golgi. Interacts (via Gelsolin-like repeat) with MIA2 and MIA3; specifically involved in the transport of large cargos like the collagen COL7A1. Interacts with DDHD1. Interacts with TMEM39A. Interacts with SACM1L; this interaction is reduced in the absence of TMEM39A. Interacts with kinase FAM20C; transport of FAM20C from the endoplasmic reticulum to the Golgi is likely to be mediated by COPII vesicles.

It is found in the cytoplasmic vesicle. It localises to the COPII-coated vesicle membrane. The protein localises to the endoplasmic reticulum membrane. The protein resides in the cytoplasm. Its subcellular location is the cytosol. Functionally, component of the coat protein complex II (COPII) which promotes the formation of transport vesicles from the endoplasmic reticulum (ER). The coat has two main functions, the physical deformation of the endoplasmic reticulum membrane into vesicles and the selection of cargo molecules for their transport to the Golgi complex. Required for the translocation of insulin-induced glucose transporter SLC2A4/GLUT4 to the cell membrane. The sequence is that of Protein transport protein Sec23A from Pongo abelii (Sumatran orangutan).